Consider the following 229-residue polypeptide: UPF0758 protein CLH_0547 (229 aa).

The region spanning 107–229 is the MPN domain; it reads KIMSPNDIAM…FISLKEKGFI (123 aa). Zn(2+)-binding residues include H178, H180, and D191. Residues 178 to 191 carry the JAMM motif motif; the sequence is HNHPSGDPTPSKED.

This sequence belongs to the UPF0758 family.

This is UPF0758 protein CLH_0547 from Clostridium botulinum (strain Alaska E43 / Type E3).